The sequence spans 323 residues: NADH-ubiquinone oxidoreductase chain 1 (323 aa).

Helical transmembrane passes span 8–28, 74–94, 105–125, 145–165, 176–196, 236–256, 258–278, and 298–318; these read VINP…LTLL, FLFL…WAPM, LGVL…LGSG, ISYE…TGGF, SIWL…STLA, ILLM…IPAF, ELTA…FLWV, and FLPL…ALAG.

The protein belongs to the complex I subunit 1 family.

The protein localises to the mitochondrion inner membrane. The catalysed reaction is a ubiquinone + NADH + 5 H(+)(in) = a ubiquinol + NAD(+) + 4 H(+)(out). Core subunit of the mitochondrial membrane respiratory chain NADH dehydrogenase (Complex I) that is believed to belong to the minimal assembly required for catalysis. Complex I functions in the transfer of electrons from NADH to the respiratory chain. The immediate electron acceptor for the enzyme is believed to be ubiquinone. This Oncorhynchus mykiss (Rainbow trout) protein is NADH-ubiquinone oxidoreductase chain 1 (MT-ND1).